Consider the following 245-residue polypeptide: Eukaryotic translation initiation factor 6-2 (245 aa).

It belongs to the eIF-6 family. In terms of assembly, monomer. Associates with the 60S ribosomal subunit.

The protein resides in the cytoplasm. The protein localises to the nucleus. It is found in the nucleolus. Functionally, binds to the 60S ribosomal subunit and prevents its association with the 40S ribosomal subunit to form the 80S initiation complex in the cytoplasm. May also be involved in ribosome biogenesis. This chain is Eukaryotic translation initiation factor 6-2, found in Arabidopsis thaliana (Mouse-ear cress).